Reading from the N-terminus, the 238-residue chain is Probable transcriptional regulatory protein SUB0364 (238 aa).

Belongs to the TACO1 family. YeeN subfamily.

It localises to the cytoplasm. In Streptococcus uberis (strain ATCC BAA-854 / 0140J), this protein is Probable transcriptional regulatory protein SUB0364.